Here is a 225-residue protein sequence, read N- to C-terminus: MKLKNIAKASLALGILTTGMITTTAQPVKASTLEVRSQATQDLSEYYNRPFFEYTNQSGYKEEGKVTFTPNYQLIDVTLTGNEKQNFGEDISNVDIFVVRENSDRSGNTASIGGITKTNGSNYIDKVKDVNLIITKNIDSVTSTSTSSTYTINKEEISLKELDFKLRKHLIDKHNLYKTEPKDSKIRITMKDGGFYTFELNKKLQTHRMGDVIDGRNIEKIEVNL.

A signal peptide spans 1 to 30 (MKLKNIAKASLALGILTTGMITTTAQPVKA). The interval 94–196 (VDIFVVRENS…RITMKDGGFY (103 aa)) is sialyl Lewis X-binding.

Belongs to the staphylococcal/streptococcal toxin family. As to quaternary structure, homodimer (via its C-terminal domain). Interacts with host FCAR and SELPLG (via sialyl Lewis X).

The protein resides in the secreted. Secreted protein that plays a role in the inhibition of host immune system. Targets myeloid cells such as monocytes or granulocytes through binding with sialyllactosamine-containing glycoproteins. Prevents initial rolling of neutrophils toward the site of infection by interacting with host SELPLG. Disrupts neutrophil motility by induction of cell adhesion via interacting with glycans but independently of SELPLG. The polypeptide is Superantigen-like protein 11 (Staphylococcus aureus (strain Newman)).